We begin with the raw amino-acid sequence, 374 residues long: Phosphomevalonate kinase (374 aa).

The protein belongs to the GHMP kinase family. In terms of assembly, homodimer. The cofactor is Mg(2+).

It catalyses the reaction (R)-5-phosphomevalonate + ATP = (R)-5-diphosphomevalonate + ADP. It participates in isoprenoid biosynthesis; isopentenyl diphosphate biosynthesis via mevalonate pathway; isopentenyl diphosphate from (R)-mevalonate: step 2/3. In terms of biological role, catalyzes the phosphorylation of (R)-mevalonate 5-phosphate (MVAP) to (R)-mevalonate 5-diphosphate (MVAPP). Functions in the mevalonate (MVA) pathway leading to isopentenyl diphosphate (IPP), a key precursor for the biosynthesis of isoprenoid compounds. The polypeptide is Phosphomevalonate kinase (Streptomyces sp. (strain CL190)).